The sequence spans 430 residues: Isocitrate dehydrogenase [NADP], mitochondrial (430 aa).

The N-terminal 27 residues, 1-27 (MIRASAIQRTAMLLRQLRGFSTSATLA), are a transit peptide targeting the mitochondrion. NADP(+) is bound by residues 101 to 103 (TIT) and arginine 108. Threonine 103 contacts substrate. Residues 120–126 (SPNGTIR), arginine 135, and arginine 158 each bind substrate. Residue aspartate 277 coordinates Mn(2+). Lysine 285 is a binding site for NADP(+). Aspartate 300 is a binding site for Mn(2+). Residues 335-340 (GTVTRH) and asparagine 353 each bind NADP(+).

It belongs to the isocitrate and isopropylmalate dehydrogenases family. As to quaternary structure, homodimer. It depends on Mg(2+) as a cofactor. Mn(2+) serves as cofactor.

It is found in the mitochondrion. It carries out the reaction D-threo-isocitrate + NADP(+) = 2-oxoglutarate + CO2 + NADPH. Mitochondrial IDP1 may regulate flux through the tricarboxylic acid cycle and respiration. Its probably critical function is the production of NADPH. In Candida tropicalis (Yeast), this protein is Isocitrate dehydrogenase [NADP], mitochondrial (IDP1).